We begin with the raw amino-acid sequence, 423 residues long: Kynurenine--oxoglutarate transaminase 1 (423 aa).

G36 lines the substrate pocket. K82 is modified (N6-succinyllysine). N185 is a substrate binding site. At K247 the chain carries N6-(pyridoxal phosphate)lysine. Residue R398 participates in substrate binding.

The protein belongs to the class-I pyridoxal-phosphate-dependent aminotransferase family. In terms of assembly, homodimer. Pyridoxal 5'-phosphate is required as a cofactor. Detected in kidney.

It localises to the cytoplasm. Its subcellular location is the cytosol. The protein resides in the mitochondrion matrix. The catalysed reaction is L-kynurenine + 2-oxoglutarate = kynurenate + L-glutamate + H2O. The enzyme catalyses 3-phenylpyruvate + L-glutamine = 2-oxoglutaramate + L-phenylalanine. It carries out the reaction an S-substituted L-cysteine + H2O = a thiol + pyruvate + NH4(+). It participates in amino-acid degradation; L-kynurenine degradation; kynurenate from L-kynurenine: step 1/2. Inhibited by aminooxyacetate (in vitro). Catalyzes the irreversible transamination of the L-tryptophan metabolite L-kynurenine to form kynurenic acid (KA), an intermediate in the tryptophan catabolic pathway which is also a broad spectrum antagonist of the three ionotropic excitatory amino acid receptors among others. Metabolizes the cysteine conjugates of certain halogenated alkenes and alkanes to form reactive metabolites. Catalyzes the beta-elimination of S-conjugates and Se-conjugates of L-(seleno)cysteine, resulting in the cleavage of the C-S or C-Se bond. The sequence is that of Kynurenine--oxoglutarate transaminase 1 from Rattus norvegicus (Rat).